The following is a 224-amino-acid chain: Haloacetate dehalogenase H-2 (224 aa).

The active-site Nucleophile is Asp-10.

This sequence belongs to the HAD-like hydrolase superfamily. S-2-haloalkanoic acid dehalogenase family.

It carries out the reaction a haloacetate + H2O = a halide anion + glycolate + H(+). This is Haloacetate dehalogenase H-2 (dehH2) from Moraxella sp. (strain B).